A 140-amino-acid polypeptide reads, in one-letter code: TPT1-like protein (140 aa).

In terms of domain architecture, TCTP spans 6–140 (MITYWDLISH…LANFKNYQKT (135 aa)).

The protein belongs to the TCTP family.

This chain is TPT1-like protein, found in Homo sapiens (Human).